The sequence spans 1985 residues: Histone-lysine N-methyltransferase SETD1B (1985 aa).

A compositionally biased stretch (basic residues) spans 1-11 (MENSHPHHHHQ). The segment at 1–25 (MENSHPHHHHQQPPPQPGPSGERRN) is disordered. Positions 67–97 (VEDPRVVGIWTKNKELELSVPKFKIDEFYVG) are interaction with WDR82. Residues 92 to 180 (DEFYVGPVPP…NIIHVELDTK (89 aa)) enclose the RRM domain. Disordered regions lie at residues 234–304 (GCGS…QDPT), 353–710 (GSSG…PPPA), 955–1480 (VKRK…RTGP), 1519–1624 (QLPP…STKL), and 1658–1687 (RGPW…PQPL). Composition is skewed to polar residues over residues 242–258 (VTPN…TAYS), 264–273 (TPNSYGQGTP), 281–304 (PFSQ…QDPT), and 353–365 (GSSG…QSQD). Over residues 366 to 381 (ATTFAHTPPPAQTATA) the composition is skewed to low complexity. 3 stretches are compositionally biased toward pro residues: residues 393 to 404 (TPAPPFPPPPEE), 423 to 433 (PAPPPLPPAEP), and 440 to 449 (GTPPGPPPPD). Residues 484 to 512 (EKPHDSLDSRIEMLLKEQRTKLPFLREQD) show a composition bias toward basic and acidic residues. Positions 522-535 (SPISSSSSQLSPLS) are enriched in low complexity. Residues 583 to 594 (PRPPPEPGPPDP) are compositionally biased toward pro residues. The segment covering 628–637 (EDMEISDDEM) has biased composition (acidic residues). Residues 650–669 (PMVVTPGAGAVAAPNVLAPN) show a composition bias toward low complexity. Pro residues predominate over residues 670 to 710 (LPLPPPPGFPPLPPPPPPPPPQPGFPMPPPLPPPPPPPPPA). Residues S977 and S985 each carry the phosphoserine modification. Positions 986–1006 (ERERDRDIADAPCELTKRDPK) are enriched in basic and acidic residues. S1022 carries the post-translational modification Phosphoserine. A compositionally biased stretch (low complexity) spans 1032 to 1055 (LSASSSSSASSSSGSSTTSPSSSA). The segment covering 1058–1083 (KEEEDRESTEEEEEEEEEEAEEEEEE) has biased composition (acidic residues). Residues 1087–1097 (SRISSPSSSSS) show a composition bias toward low complexity. The span at 1100–1120 (KDDEDDNEADSDGQIDSDIDD) shows a compositional bias: acidic residues. Residues 1143–1178 (SITTSKAPAESSSSSSESSGSSEFESSSESESSSSS) show a composition bias toward low complexity. A compositionally biased stretch (acidic residues) spans 1179-1202 (SEDEEEMTVPGVEEEEEEEEEEEK). The segment covering 1205 to 1217 (AMAAATVVAMAEE) has biased composition (low complexity). A compositionally biased stretch (acidic residues) spans 1247–1261 (GTEEEVDIEAEDEVP). Phosphoserine is present on residues S1283, S1301, and S1354. Pro residues predominate over residues 1331-1373 (EPPPMLSLPLQPPLPPPRLLRPPSPPPEPETPEPPKPPVPLEP). Positions 1402-1442 (PGGEPPLSGSSSGLSLSSPQVPGSPFSYPSPSPGLSSGGLP) are enriched in low complexity. Residues 1535-1544 (IKRKPGRPRR) show a composition bias toward basic residues. Composition is skewed to pro residues over residues 1600–1619 (PAPP…PPPV) and 1678–1687 (SPEPSPPQPL). Residues S1678 and S1682 each carry the phosphoserine modification. The WDR5 interaction motif (WIN) motif lies at 1764–1769 (GCARSE). Positions 1786–1819 (SRASTDEPPMDTQGMSIPAQPHASTRAGSERRSE) are disordered. The RxxxRR motif motif lies at 1817 to 1822 (RSEQRR). The region spanning 1846–1963 (KKLKFCKSHI…VNEEITYDYK (118 aa)) is the SET domain. Residue Y1962 coordinates S-adenosyl-L-methionine. The region spanning 1969–1985 (VKIPCLCGSENCRGTLN) is the Post-SET domain.

This sequence belongs to the class V-like SAM-binding methyltransferase superfamily. In terms of assembly, component of the SET1B/COMPASS complex composed of the catalytic subunit SETD1B, WDR5, WDR82, RBBP5, ASH2L/ASH2, CXXC1/CFP1, HCFC1, DPY30 homotrimer and BOD1. Forms a core complex with the evolutionary conserved subcomplex WRAD composed of WDR5, RBBP5, ASH2L/ASH2 and DPY30 subunits; WRAD differentially stimulates the methyltransferase activity. Interacts with HCFC1 and ASH2L/ASH2. Interacts (via the RRM domain) with WDR82. Interacts (via the RRM domain) with hyperphosphorylated C-terminal domain (CTD) of RNA polymerase II large subunit (POLR2A) only in the presence of WDR82. Binds specifically to CTD heptad repeats phosphorylated on 'Ser-5' of each heptad. Interacts with RBM15. Interacts (via WIN motif) with WDR5. Widely expressed.

The protein localises to the nucleus. Its subcellular location is the nucleus speckle. It is found in the chromosome. It localises to the cytoplasm. It carries out the reaction L-lysyl(4)-[histone H3] + S-adenosyl-L-methionine = N(6)-methyl-L-lysyl(4)-[histone H3] + S-adenosyl-L-homocysteine + H(+). The catalysed reaction is N(6)-methyl-L-lysyl(4)-[histone H3] + S-adenosyl-L-methionine = N(6),N(6)-dimethyl-L-lysyl(4)-[histone H3] + S-adenosyl-L-homocysteine + H(+). It catalyses the reaction N(6),N(6)-dimethyl-L-lysyl(4)-[histone H3] + S-adenosyl-L-methionine = N(6),N(6),N(6)-trimethyl-L-lysyl(4)-[histone H3] + S-adenosyl-L-homocysteine + H(+). In terms of biological role, histone methyltransferase that catalyzes methyl group transfer from S-adenosyl-L-methionine to the epsilon-amino group of 'Lys-4' of histone H3 (H3K4) via a non-processive mechanism. Part of chromatin remodeling machinery, forms H3K4me1, H3K4me2 and H3K4me3 methylation marks at active chromatin sites where transcription and DNA repair take place. Plays an essential role in regulating the transcriptional programming of multipotent hematopoietic progenitor cells and lymphoid lineage specification during hematopoiesis. This Mus musculus (Mouse) protein is Histone-lysine N-methyltransferase SETD1B (Setd1b).